We begin with the raw amino-acid sequence, 786 residues long: Kazrin-A (786 aa).

Residues 44–70 are disordered; it reads EEPGEPQEHQQQQQQQNHQDAPVQRQK. Residues 52-62 are compositionally biased toward low complexity; the sequence is HQQQQQQQNHQ. The stretch at 92 to 270 forms a coiled coil; that stretch reads LLHEEVLRLQ…SLATLTKDVP (179 aa). Residues 350–425 form a disordered region; the sequence is MSDASVMEGE…LFDDSDSLSS (76 aa). SAM domains are found at residues 457 to 522, 535 to 599, and 623 to 686; these read WRAG…YRDA, DHHW…LHTL, and WTCQ…SEEM. The interval 703–760 is disordered; that stretch reads PLGTPPTLHRQSSLSSSSPSCHDDQQSLRRVKQQLGLSPKNLTARNISHQSRSGSFPR. A compositionally biased stretch (polar residues) spans 742-758; that stretch reads KNLTARNISHQSRSGSF.

The protein belongs to the kazrin family.

The sequence is that of Kazrin-A (kazna) from Danio rerio (Zebrafish).